Reading from the N-terminus, the 231-residue chain is Somatolactin (231 aa).

The first 24 residues, 1-24 (MNMMTVKQQGVWAALLWPYLLTAS), serve as a signal peptide directing secretion. 3 disulfide bridges follow: cysteine 29–cysteine 39, cysteine 89–cysteine 205, and cysteine 222–cysteine 230. The N-linked (GlcNAc...) asparagine glycan is linked to asparagine 145.

This sequence belongs to the somatotropin/prolactin family. In terms of tissue distribution, pituitary gland.

Its subcellular location is the secreted. The chain is Somatolactin from Paralichthys olivaceus (Bastard halibut).